Reading from the N-terminus, the 429-residue chain is MDKIRIIGGGSLNGTIPISGAKNAALPLMIAALLSEEKLVLENVPRLADVALLQRILGNHGVDITVNGKRNGDDPHAGQTMEIDARVIVDTTAPYDLVSRMRASFWVVGPLLARMGEARVSLPGGCAIGTRPVDFHLDALRALGADIDIDAGYVVARAPHGLTGARIVFPKVSVGATHTAIMAAALAKGDTVIENAAREPEIVDLADCLIKMGARIEGAGTSTIEISGVPRLRGARHSVLPDRIETGTYAMATAMTGGDVTLAGARADLLESALDVLRKAGAQIDVNNEGIRVRRNGAGIFPVEVSTAPHPGFPTDLQAQLMALMTRAQGRSRITETIFENRFMHVQELARLGANIHLEGDTAIVEGSDRLKGAPVMATDLRASVSLVIAGLAAEGETMIQRVYHLDRGFERLEEKLSRCGAQIERISG.

Residue 22-23 (KN) coordinates phosphoenolpyruvate. Arg102 lines the UDP-N-acetyl-alpha-D-glucosamine pocket. Catalysis depends on Cys126, which acts as the Proton donor. Cys126 is modified (2-(S-cysteinyl)pyruvic acid O-phosphothioketal). UDP-N-acetyl-alpha-D-glucosamine contacts are provided by residues 171–174 (KVSV), Asp316, and Ile338.

It belongs to the EPSP synthase family. MurA subfamily.

The protein localises to the cytoplasm. The enzyme catalyses phosphoenolpyruvate + UDP-N-acetyl-alpha-D-glucosamine = UDP-N-acetyl-3-O-(1-carboxyvinyl)-alpha-D-glucosamine + phosphate. Its pathway is cell wall biogenesis; peptidoglycan biosynthesis. In terms of biological role, cell wall formation. Adds enolpyruvyl to UDP-N-acetylglucosamine. This Azorhizobium caulinodans (strain ATCC 43989 / DSM 5975 / JCM 20966 / LMG 6465 / NBRC 14845 / NCIMB 13405 / ORS 571) protein is UDP-N-acetylglucosamine 1-carboxyvinyltransferase.